The chain runs to 288 residues: Prepilin leader peptidase/N-methyltransferase (288 aa).

Residues 14–34 (FITLATVLGLLVGSFLNVVVY) traverse the membrane as a helical segment. Positions 71, 74, 96, and 99 each coordinate Zn(2+). 6 consecutive transmembrane segments (helical) span residues 103–123 (ISVRYPLVEVGCALLSMVVAW), 127–147 (ASVEALVLLPLTWSLLALSLI), 158–178 (IVLPGLWLGLIVNYFGVWVPL), 182–202 (VCGAVVGYLSLWTVYWLFKLV), 227–247 (VLPLTLLLSSVLGALVGVYLL), and 254–274 (MGTAMPFGPYLAIAGWIAVLW).

It belongs to the peptidase A24 family. Zn(2+) is required as a cofactor.

It is found in the cell inner membrane. The catalysed reaction is Typically cleaves a -Gly-|-Phe- bond to release an N-terminal, basic peptide of 5-8 residues from type IV prepilin, and then N-methylates the new N-terminal amino group, the methyl donor being S-adenosyl-L-methionine.. Plays an essential role in type IV pili and type II pseudopili formation by proteolytically removing the leader sequence from substrate proteins and subsequently monomethylating the alpha-amino group of the newly exposed N-terminal phenylalanine. The protein is Prepilin leader peptidase/N-methyltransferase (pilD) of Pseudomonas putida (Arthrobacter siderocapsulatus).